Here is a 293-residue protein sequence, read N- to C-terminus: Acetylglutamate kinase (293 aa).

Substrate is bound by residues 68–69 (GG), R90, and N189.

This sequence belongs to the acetylglutamate kinase family. ArgB subfamily.

Its subcellular location is the cytoplasm. It catalyses the reaction N-acetyl-L-glutamate + ATP = N-acetyl-L-glutamyl 5-phosphate + ADP. It functions in the pathway amino-acid biosynthesis; L-arginine biosynthesis; N(2)-acetyl-L-ornithine from L-glutamate: step 2/4. In terms of biological role, catalyzes the ATP-dependent phosphorylation of N-acetyl-L-glutamate. The sequence is that of Acetylglutamate kinase from Caldicellulosiruptor saccharolyticus (strain ATCC 43494 / DSM 8903 / Tp8T 6331).